Consider the following 391-residue polypeptide: S-adenosylmethionine synthase (391 aa).

ATP is bound at residue histidine 14. Aspartate 16 contributes to the Mg(2+) binding site. Glutamate 42 is a binding site for K(+). Glutamate 55 and glutamine 98 together coordinate L-methionine. Residues glutamine 98–glutamate 108 form a flexible loop region. Residues aspartate 172 to lysine 174, arginine 238 to phenylalanine 239, aspartate 247, arginine 253 to lysine 254, alanine 270, and lysine 274 each bind ATP. Aspartate 247 serves as a coordination point for L-methionine. Residue lysine 278 coordinates L-methionine.

Belongs to the AdoMet synthase family. As to quaternary structure, homotetramer; dimer of dimers. Mg(2+) is required as a cofactor. Requires K(+) as cofactor.

It localises to the cytoplasm. It catalyses the reaction L-methionine + ATP + H2O = S-adenosyl-L-methionine + phosphate + diphosphate. The protein operates within amino-acid biosynthesis; S-adenosyl-L-methionine biosynthesis; S-adenosyl-L-methionine from L-methionine: step 1/1. Catalyzes the formation of S-adenosylmethionine (AdoMet) from methionine and ATP. The overall synthetic reaction is composed of two sequential steps, AdoMet formation and the subsequent tripolyphosphate hydrolysis which occurs prior to release of AdoMet from the enzyme. This Clostridium botulinum (strain Hall / ATCC 3502 / NCTC 13319 / Type A) protein is S-adenosylmethionine synthase.